A 1429-amino-acid chain; its full sequence is Nitric oxide synthase 1 (1429 aa).

Residues 1-200 (MEENTFGVQQ…LQDIGEHDEL (200 aa)) are interaction with NOSIP. Residues 17 to 99 (SVRLFKRKVG…ETHVVLILRG (83 aa)) form the PDZ domain. 3 disordered regions span residues 152–174 (VTGLGNGPQHAQGHGQGAGSVSQ), 214–255 (GSKA…DNDR), and 271–298 (NNPYSEKEQSPTSGKQSPTKNGSPSRCP). Residues 160–174 (QHAQGHGQGAGSVSQ) show a composition bias toward low complexity. Residues 163 to 240 (QGHGQGAGSV…TGIQVDRDLD (78 aa)) form an interaction with DYNLL1/PIN region. Residues 226 to 243 (AEMKDTGIQVDRDLDGKS) are compositionally biased toward basic and acidic residues. Ser-280 carries the post-translational modification Phosphoserine. A compositionally biased stretch (polar residues) spans 280 to 294 (SPTSGKQSPTKNGSP). Ser-334 lines the (6R)-L-erythro-5,6,7,8-tetrahydrobiopterin pocket. Cys-415 provides a ligand contact to heme b. Positions 478, 587, 588, and 592 each coordinate L-arginine. Positions 677, 678, and 691 each coordinate (6R)-L-erythro-5,6,7,8-tetrahydrobiopterin. Position 706 (Tyr-706) interacts with heme b. The calmodulin-binding stretch occupies residues 725-745 (KRRAIGFKKLAEAVKFSAKLM). Residues 755 to 935 (ATILYATETG…AFRTWAKKVF (181 aa)) form the Flavodoxin-like domain. FMN contacts are provided by Thr-761, Glu-762, Thr-763, Lys-765, Ser-766, Ser-807, Thr-808, and Gly-812. Residues Ser-847, Ser-857, and Ser-858 each carry the phosphoserine modification. 5 residues coordinate FMN: Ser-886, His-891, Cys-893, Glu-919, and Gln-923. Residues 990 to 1237 (KRVSAARLLS…VRGAPSFHLP (248 aa)) form the FAD-binding FR-type domain. Arg-1010 is a binding site for NADP(+). Residues His-1032, Arg-1173, Tyr-1174, Tyr-1175, Ser-1176, Thr-1191, and Ala-1193 each contribute to the FAD site. Ser-1196 serves as a coordination point for NADP(+). The FAD site is built by Tyr-1197, Val-1210, Cys-1211, and Ser-1212. Residues Thr-1251, Arg-1284, Ser-1313, Arg-1314, Lys-1320, Tyr-1322, Gln-1324, Asp-1357, Thr-1398, and Arg-1400 each contribute to the NADP(+) site.

It belongs to the NOS family. Homodimer. Interacts with DLG4 (via N-terminal tandem pair of PDZ domains); the interaction possibly being prevented by the association between NOS1 and CAPON. Forms a ternary complex with CAPON and RASD1. Forms a ternary complex with CAPON and SYN1. Interacts with ZDHHC23. Interacts with NOSIP; which may impair its synaptic location. Interacts with HTR4. Interacts with SLC6A4. Interacts with VAC14. Forms a complex with ASL, ASS1 and SLC7A1; the complex regulates cell-autonomous L-arginine synthesis and citrulline recycling while channeling extracellular L-arginine to nitric oxide synthesis pathway. Interacts with DMD; localizes NOS1 to sarcolemma in muscle cells. Interacts with DYNLL1; inhibits the nitric oxide synthase activity. Requires heme b as cofactor. FAD is required as a cofactor. It depends on FMN as a cofactor. The cofactor is (6R)-L-erythro-5,6,7,8-tetrahydrobiopterin. Ubiquitinated; mediated by STUB1/CHIP in the presence of Hsp70 and Hsp40 (in vitro). In terms of tissue distribution, isoform N-NOS-1 is expressed in brain and colorectum. Found in the Auerbach's plexus of the enteric nervous system. Isoform PNNOS is expressed in the penis, urethra, prostate, and skeletal muscle, and coexists with the cerebellar nnos in the pelvic plexus, bladder and liver, and is detectable in the cerebellum.

Its subcellular location is the cell membrane. The protein localises to the sarcolemma. It localises to the cell projection. It is found in the dendritic spine. The catalysed reaction is 2 L-arginine + 3 NADPH + 4 O2 + H(+) = 2 L-citrulline + 2 nitric oxide + 3 NADP(+) + 4 H2O. With respect to regulation, stimulated by calcium/calmodulin. Inhibited by DYNLL1 that prevents the dimerization of the protein. Inhibited by NOSIP. Its function is as follows. Produces nitric oxide (NO) which is a messenger molecule with diverse functions throughout the body. In the brain and peripheral nervous system, NO displays many properties of a neurotransmitter. Inhibitory transmitter for non-adrenergic and non-cholinergic nerves in the colorectum. Probably has nitrosylase activity and mediates cysteine S-nitrosylation of cytoplasmic target proteins such SRR. Inhibitory transmitter for non-adrenergic and non-cholinergic nerves in the colorectum. The polypeptide is Nitric oxide synthase 1 (Rattus norvegicus (Rat)).